A 219-amino-acid polypeptide reads, in one-letter code: Pyridoxine/pyridoxamine 5'-phosphate oxidase (219 aa).

Residues 15–18 (RRDY) and Lys-73 each bind substrate. Residues 68–73 (RMVLLK), 83–84 (YT), Arg-89, Lys-90, and Gln-112 each bind FMN. 3 residues coordinate substrate: Tyr-130, Arg-134, and Ser-138. FMN contacts are provided by residues 147–148 (QS) and Trp-192. Substrate is bound at residue 198 to 200 (RLH). Arg-202 serves as a coordination point for FMN.

It belongs to the pyridoxamine 5'-phosphate oxidase family. Homodimer. It depends on FMN as a cofactor.

The enzyme catalyses pyridoxamine 5'-phosphate + O2 + H2O = pyridoxal 5'-phosphate + H2O2 + NH4(+). The catalysed reaction is pyridoxine 5'-phosphate + O2 = pyridoxal 5'-phosphate + H2O2. It participates in cofactor metabolism; pyridoxal 5'-phosphate salvage; pyridoxal 5'-phosphate from pyridoxamine 5'-phosphate: step 1/1. It functions in the pathway cofactor metabolism; pyridoxal 5'-phosphate salvage; pyridoxal 5'-phosphate from pyridoxine 5'-phosphate: step 1/1. Its function is as follows. Catalyzes the oxidation of either pyridoxine 5'-phosphate (PNP) or pyridoxamine 5'-phosphate (PMP) into pyridoxal 5'-phosphate (PLP). The sequence is that of Pyridoxine/pyridoxamine 5'-phosphate oxidase from Acaryochloris marina (strain MBIC 11017).